Consider the following 493-residue polypeptide: Proline--tRNA ligase (493 aa).

This sequence belongs to the class-II aminoacyl-tRNA synthetase family. ProS type 3 subfamily. In terms of assembly, homodimer.

The protein localises to the cytoplasm. It carries out the reaction tRNA(Pro) + L-proline + ATP = L-prolyl-tRNA(Pro) + AMP + diphosphate. Its function is as follows. Catalyzes the attachment of proline to tRNA(Pro) in a two-step reaction: proline is first activated by ATP to form Pro-AMP and then transferred to the acceptor end of tRNA(Pro). This chain is Proline--tRNA ligase, found in Porphyromonas gingivalis (strain ATCC 33277 / DSM 20709 / CIP 103683 / JCM 12257 / NCTC 11834 / 2561).